The sequence spans 154 residues: 17 kDa surface antigen (154 aa).

The N-terminal stretch at 1–19 (MKLLSKIMIIALAASMLQA) is a signal peptide. Cysteine 20 carries N-palmitoyl cysteine lipidation. Cysteine 20 carries the S-diacylglycerol cysteine lipid modification.

It belongs to the rickettsiale 17 kDa surface antigen family.

It localises to the cell outer membrane. This Rickettsia australis protein is 17 kDa surface antigen (omp).